Consider the following 151-residue polypeptide: UPF0178 protein Spea_2958 (151 aa).

It belongs to the UPF0178 family.

This chain is UPF0178 protein Spea_2958, found in Shewanella pealeana (strain ATCC 700345 / ANG-SQ1).